The sequence spans 680 residues: Fermitin family homolog 2 (680 aa).

The tract at residues 40-81 (HIGGVMLKLVEKLDVKKDWSDHALWWEKKRTWLLKTHWTLDK) is interaction with membranes containing phosphatidylinositol phosphate. The segment at 141-165 (LKKPRDPTKKKKKKLDDQSEDEALE) is disordered. Phosphoserine occurs at positions 159, 181, 339, and 351. The FERM domain occupies 189–661 (MTPTYDAHDG…GYIFLSTRAK (473 aa)). The PH domain maps to 380–476 (KVFKPKKLTL…WMAACRLASK (97 aa)). Lysine 383 serves as a coordination point for a 1,2-diacyl-sn-glycero-3-phospho-(1D-myo-inositol-3,4,5-trisphosphate). A Phosphoserine modification is found at serine 666.

The protein belongs to the kindlin family. As to quaternary structure, interacts with ILK. Interacts with FBLIM1. Interacts with ITGB1 and ITGB3. Interacts with active, unphosphorylated CTNNB1. Identified in a complex with CTNNB1 and TCF7L2/TCF4. Interacts with ITGB1; the interaction is inhibited in presence of ITGB1BP1. As to expression, ubiquitous. Found in numerous tumor tissues.

Its subcellular location is the cytoplasm. It localises to the cell cortex. It is found in the cytoskeleton. The protein localises to the stress fiber. The protein resides in the cell junction. Its subcellular location is the focal adhesion. It localises to the membrane. It is found in the cell projection. The protein localises to the lamellipodium membrane. The protein resides in the nucleus. Its subcellular location is the myofibril. It localises to the sarcomere. It is found in the i band. The protein localises to the cell surface. Its function is as follows. Scaffolding protein that enhances integrin activation mediated by TLN1 and/or TLN2, but activates integrins only weakly by itself. Binds to membranes enriched in phosphoinositides. Enhances integrin-mediated cell adhesion onto the extracellular matrix and cell spreading; this requires both its ability to interact with integrins and with phospholipid membranes. Required for the assembly of focal adhesions. Participates in the connection between extracellular matrix adhesion sites and the actin cytoskeleton and also in the orchestration of actin assembly and cell shape modulation. Recruits FBLIM1 to focal adhesions. Plays a role in the TGFB1 and integrin signaling pathways. Stabilizes active CTNNB1 and plays a role in the regulation of transcription mediated by CTNNB1 and TCF7L2/TCF4 and in Wnt signaling. The chain is Fermitin family homolog 2 (FERMT2) from Homo sapiens (Human).